A 193-amino-acid polypeptide reads, in one-letter code: Acyl carrier protein phosphodiesterase (193 aa).

This sequence belongs to the AcpH family.

The enzyme catalyses holo-[ACP] + H2O = apo-[ACP] + (R)-4'-phosphopantetheine + H(+). Functionally, converts holo-ACP to apo-ACP by hydrolytic cleavage of the phosphopantetheine prosthetic group from ACP. This chain is Acyl carrier protein phosphodiesterase, found in Yersinia pestis.